We begin with the raw amino-acid sequence, 1222 residues long: ATP-dependent helicase/nuclease subunit A (1222 aa).

Residues 39-495 (QKRTAQQIEA…ILLKENFRSQ (457 aa)) enclose the UvrD-like helicase ATP-binding domain. Residue 60–67 (ASAGSGKT) participates in ATP binding. Residues 524–810 (QLIAGSHAQT…NLMTIHKSKG (287 aa)) enclose the UvrD-like helicase C-terminal domain.

It belongs to the helicase family. AddA subfamily. As to quaternary structure, heterodimer of AddA and AddB/RexB. It depends on Mg(2+) as a cofactor.

It catalyses the reaction Couples ATP hydrolysis with the unwinding of duplex DNA by translocating in the 3'-5' direction.. The enzyme catalyses ATP + H2O = ADP + phosphate + H(+). Functionally, the heterodimer acts as both an ATP-dependent DNA helicase and an ATP-dependent, dual-direction single-stranded exonuclease. Recognizes the chi site generating a DNA molecule suitable for the initiation of homologous recombination. The AddA nuclease domain is required for chi fragment generation; this subunit has the helicase and 3' -&gt; 5' nuclease activities. This is ATP-dependent helicase/nuclease subunit A from Streptococcus pyogenes serotype M12 (strain MGAS9429).